The following is a 519-amino-acid chain: Acetylcholine receptor subunit gamma (519 aa).

A signal peptide spans 1-22; that stretch reads MQGGQRPHLLLLLLAVCLGAQS. Over 23-240 the chain is Extracellular; the sequence is RNQEERLLAD…VVFYLLIQRK (218 aa). N52 and N163 each carry an N-linked (GlcNAc...) asparagine glycan. A disulfide bond links C150 and C164. Helical transmembrane passes span 241-265, 274-292, and 308-329; these read PLFYVINIIAPCVLISSVAILIYFL, CTVATNVLLAQTVFLFLVA, and YLTFLMVVTILIVVNSVVVLNV. Topologically, residues 330–476 are cytoplasmic; the sequence is SLRSPHTHSM…WLLVGRVLDR (147 aa). The helical transmembrane segment at 477–497 threads the bilayer; the sequence is VCFLAMLSLFICGTAGIFLMA.

Belongs to the ligand-gated ion channel (TC 1.A.9) family. Acetylcholine receptor (TC 1.A.9.1) subfamily. Gamma/CHRNG sub-subfamily. As to quaternary structure, pentamer of two alpha chains, and one each of the beta, delta, and gamma (in immature muscle) or epsilon (in mature muscle) chains. In terms of tissue distribution, at least in myotubes of skeletal muscle.

It is found in the postsynaptic cell membrane. The protein resides in the cell membrane. It carries out the reaction K(+)(in) = K(+)(out). The enzyme catalyses Na(+)(in) = Na(+)(out). Its function is as follows. After binding acetylcholine, the AChR responds by an extensive change in conformation that affects all subunits and leads to opening of an ion-conducting channel across the plasma membrane. This Mus musculus (Mouse) protein is Acetylcholine receptor subunit gamma (Chrng).